Reading from the N-terminus, the 154-residue chain is Crossover junction endodeoxyribonuclease RuvC (154 aa).

Active-site residues include aspartate 7, glutamate 67, and aspartate 139. Mg(2+) is bound by residues aspartate 7, glutamate 67, and aspartate 139.

The protein belongs to the RuvC family. In terms of assembly, homodimer which binds Holliday junction (HJ) DNA. The HJ becomes 2-fold symmetrical on binding to RuvC with unstacked arms; it has a different conformation from HJ DNA in complex with RuvA. In the full resolvosome a probable DNA-RuvA(4)-RuvB(12)-RuvC(2) complex forms which resolves the HJ. Mg(2+) serves as cofactor.

The protein resides in the cytoplasm. It carries out the reaction Endonucleolytic cleavage at a junction such as a reciprocal single-stranded crossover between two homologous DNA duplexes (Holliday junction).. In terms of biological role, the RuvA-RuvB-RuvC complex processes Holliday junction (HJ) DNA during genetic recombination and DNA repair. Endonuclease that resolves HJ intermediates. Cleaves cruciform DNA by making single-stranded nicks across the HJ at symmetrical positions within the homologous arms, yielding a 5'-phosphate and a 3'-hydroxyl group; requires a central core of homology in the junction. The consensus cleavage sequence is 5'-(A/T)TT(C/G)-3'. Cleavage occurs on the 3'-side of the TT dinucleotide at the point of strand exchange. HJ branch migration catalyzed by RuvA-RuvB allows RuvC to scan DNA until it finds its consensus sequence, where it cleaves and resolves the cruciform DNA. The polypeptide is Crossover junction endodeoxyribonuclease RuvC (Prochlorococcus marinus (strain MIT 9313)).